The chain runs to 191 residues: UPF0149 protein VV1_1551 (191 aa).

It belongs to the UPF0149 family.

This chain is UPF0149 protein VV1_1551, found in Vibrio vulnificus (strain CMCP6).